The primary structure comprises 241 residues: Small ribosomal subunit protein uS2 (241 aa).

Belongs to the universal ribosomal protein uS2 family.

The polypeptide is Small ribosomal subunit protein uS2 (Sodalis glossinidius (strain morsitans)).